Consider the following 375-residue polypeptide: Phosphoribulokinase, chloroplastic (375 aa).

The transit peptide at M1–A31 directs the protein to the chloroplast. A disulfide bond links C47 and C86.

This sequence belongs to the phosphoribulokinase family. Component of a complex that contains two dimers of PRK, two tetramers of GAPDH and CP12.

It is found in the plastid. Its subcellular location is the chloroplast. It catalyses the reaction D-ribulose 5-phosphate + ATP = D-ribulose 1,5-bisphosphate + ADP + H(+). The protein operates within carbohydrate biosynthesis; Calvin cycle. Light regulated via thioredoxin by reversible oxidation/reduction of sulfhydryl/disulfide groups. This Chlamydomonas reinhardtii (Chlamydomonas smithii) protein is Phosphoribulokinase, chloroplastic (PRKA).